The following is a 228-amino-acid chain: NAD(P)H-quinone oxidoreductase subunit K, chloroplastic (228 aa).

Cysteine 43, cysteine 44, cysteine 108, and cysteine 139 together coordinate [4Fe-4S] cluster.

It belongs to the complex I 20 kDa subunit family. As to quaternary structure, NDH is composed of at least 16 different subunits, 5 of which are encoded in the nucleus. The cofactor is [4Fe-4S] cluster.

The protein localises to the plastid. It is found in the chloroplast thylakoid membrane. It carries out the reaction a plastoquinone + NADH + (n+1) H(+)(in) = a plastoquinol + NAD(+) + n H(+)(out). The catalysed reaction is a plastoquinone + NADPH + (n+1) H(+)(in) = a plastoquinol + NADP(+) + n H(+)(out). In terms of biological role, NDH shuttles electrons from NAD(P)H:plastoquinone, via FMN and iron-sulfur (Fe-S) centers, to quinones in the photosynthetic chain and possibly in a chloroplast respiratory chain. The immediate electron acceptor for the enzyme in this species is believed to be plastoquinone. Couples the redox reaction to proton translocation, and thus conserves the redox energy in a proton gradient. The chain is NAD(P)H-quinone oxidoreductase subunit K, chloroplastic from Ceratophyllum demersum (Rigid hornwort).